The chain runs to 336 residues: UPF0284 protein PYRAB00380 (336 aa).

The protein belongs to the UPF0284 family.

The chain is UPF0284 protein PYRAB00380 from Pyrococcus abyssi (strain GE5 / Orsay).